The sequence spans 236 residues: Small ribosomal subunit protein uS2c (236 aa).

This sequence belongs to the universal ribosomal protein uS2 family.

The protein resides in the plastid. It localises to the chloroplast. The chain is Small ribosomal subunit protein uS2c (rps2) from Nandina domestica (Heavenly bamboo).